Reading from the N-terminus, the 506-residue chain is ESX-5 secretion system ATPase EccB5 (506 aa).

The helical transmembrane segment at 56–76 (VVASVSAALVICLGALLWSFI) threads the bilayer.

This sequence belongs to the EccB family. Part of the ESX-5 / type VII secretion system (T7SS), which is composed of cytosolic and membrane components. The ESX-5 membrane complex is composed of EccB5, EccC5, EccD5 and EccE5.

It localises to the cell inner membrane. Its function is as follows. An ATPase. Part of the ESX-5 specialized secretion system, which is responsible for the secretion of EsxN and a number of PE_PGRS and PPE proteins, including PPE41. The sequence is that of ESX-5 secretion system ATPase EccB5 from Mycobacterium tuberculosis (strain CDC 1551 / Oshkosh).